The following is a 235-amino-acid chain: Motile sperm domain-containing protein 3 (235 aa).

Disordered regions lie at residues 1–25 and 143–171; these read MRRG…RGAP and ELQG…FQEH. Residues 33–145 form the MSP domain; sequence PVLVFPPDLV…RAPAYPLELQ (113 aa). The segment covering 149-164 has biased composition (pro residues); sequence DPAPRPGPPAGTPPPT. The next 2 helical transmembrane spans lie at 180 to 200 and 213 to 233; these read SFLL…LPLP and VSLG…MVFL.

It localises to the membrane. The sequence is that of Motile sperm domain-containing protein 3 (MOSPD3) from Homo sapiens (Human).